The primary structure comprises 188 residues: dCTP deaminase (188 aa).

Residues 111–116 (KSTYAR), 135–137 (TLE), Q156, Y170, and Q180 contribute to the dCTP site. The active-site Proton donor/acceptor is E137.

This sequence belongs to the dCTP deaminase family. In terms of assembly, homotrimer.

The catalysed reaction is dCTP + H2O + H(+) = dUTP + NH4(+). It functions in the pathway pyrimidine metabolism; dUMP biosynthesis; dUMP from dCTP (dUTP route): step 1/2. Catalyzes the deamination of dCTP to dUTP. This is dCTP deaminase from Acidovorax sp. (strain JS42).